The primary structure comprises 1210 residues: Ice nucleation protein (1210 aa).

The tract at residues 165-1156 is octapeptide periodicity; it reads AVYGSTLTGA…LSGGENSTLI (992 aa).

Belongs to the bacterial ice nucleation protein family.

The protein resides in the cell outer membrane. Ice nucleation proteins enable bacteria to nucleate crystallization in supercooled water. This chain is Ice nucleation protein (inaW), found in Pseudomonas fluorescens.